We begin with the raw amino-acid sequence, 307 residues long: D-alanine--D-alanine ligase (307 aa).

The ATP-grasp domain maps to 101–301 (KTVMRAAGVS…FGELVRWMVE (201 aa)). Residue 127–182 (PLTPPYVVKPIAEGSSMGVIIVREERSHPPQILASDEWVYGEEVLAETYIAGRELT) participates in ATP binding. Positions 251, 268, and 270 each coordinate Mg(2+).

It belongs to the D-alanine--D-alanine ligase family. Mg(2+) serves as cofactor. Requires Mn(2+) as cofactor.

It is found in the cytoplasm. It carries out the reaction 2 D-alanine + ATP = D-alanyl-D-alanine + ADP + phosphate + H(+). The protein operates within cell wall biogenesis; peptidoglycan biosynthesis. Its function is as follows. Cell wall formation. The chain is D-alanine--D-alanine ligase from Methylorubrum populi (strain ATCC BAA-705 / NCIMB 13946 / BJ001) (Methylobacterium populi).